The following is a 340-amino-acid chain: NADH-quinone oxidoreductase subunit H (340 aa).

8 helical membrane passes run 4–24 (TIGI…PLLI), 78–98 (YLFV…WAVI), 113–133 (VLYL…AGWA), 151–171 (VSYE…AGSM), 184–204 (MLHW…ISGI), 244–264 (SMIL…LSPF), 273–293 (IFFI…FLFV), and 316–336 (VLIP…VAHV).

Belongs to the complex I subunit 1 family. NDH-1 is composed of 14 different subunits. Subunits NuoA, H, J, K, L, M, N constitute the membrane sector of the complex.

It localises to the cell inner membrane. It carries out the reaction a quinone + NADH + 5 H(+)(in) = a quinol + NAD(+) + 4 H(+)(out). NDH-1 shuttles electrons from NADH, via FMN and iron-sulfur (Fe-S) centers, to quinones in the respiratory chain. The immediate electron acceptor for the enzyme in this species is believed to be ubiquinone. Couples the redox reaction to proton translocation (for every two electrons transferred, four hydrogen ions are translocated across the cytoplasmic membrane), and thus conserves the redox energy in a proton gradient. This subunit may bind ubiquinone. This is NADH-quinone oxidoreductase subunit H from Legionella pneumophila subsp. pneumophila (strain Philadelphia 1 / ATCC 33152 / DSM 7513).